A 128-amino-acid polypeptide reads, in one-letter code: Ribonuclease P protein component (128 aa).

It belongs to the RnpA family. Consists of a catalytic RNA component (M1 or rnpB) and a protein subunit.

The catalysed reaction is Endonucleolytic cleavage of RNA, removing 5'-extranucleotides from tRNA precursor.. RNaseP catalyzes the removal of the 5'-leader sequence from pre-tRNA to produce the mature 5'-terminus. It can also cleave other RNA substrates such as 4.5S RNA. The protein component plays an auxiliary but essential role in vivo by binding to the 5'-leader sequence and broadening the substrate specificity of the ribozyme. This chain is Ribonuclease P protein component, found in Mycoplasma genitalium (strain ATCC 33530 / DSM 19775 / NCTC 10195 / G37) (Mycoplasmoides genitalium).